The following is a 317-amino-acid chain: Transcriptional regulator LsrR (317 aa).

Residues 33–56 (QSEISDRLGLTRLKVSRLLEKGHQ) constitute a DNA-binding region (H-T-H motif).

Belongs to the SorC transcriptional regulatory family.

The protein resides in the cytoplasm. Inactivated by phosphorylated autoinducer-2 (phospho-AI-2). Phospho-AI-2 acts by binding to LsrR, which is then unable to bind to the promoter regions, allowing the transcription of the target genes. In terms of biological role, transcriptional regulator that represses the expression of the lsr operon in the absence of the quorum-sensing signaling molecule autoinducer 2 (AI-2). It also represses the expression of the lsrRK operon. Acts by binding directly to the lsrA and lsrR promoter regions. In the presence of phosphorylated autoinducer-2 (phospho-AI-2), LsrR is inactivated, leading to the transcription of the genes. In Escherichia coli (strain SMS-3-5 / SECEC), this protein is Transcriptional regulator LsrR (lsrR).